We begin with the raw amino-acid sequence, 192 residues long: MAAERERGGRERGGRDRDERDSEFVDKLVHINRVAKVVKGGKRFGFAALVVIGDQKGRVGFGHGKAREVPEAIRKATDSAKRNLTRVPLREGRTLHHDIAGRHGAGRVYLRAAPAGTGIIAGGPMRAVFETLGIQDVVAKSVGSSNPYNMIRATFDALKHQDSPRSVANRRNIKVSVLQARRVGGDAEASAD.

Positions M1–D21 are disordered. The S5 DRBM domain maps to F24–V87.

This sequence belongs to the universal ribosomal protein uS5 family. In terms of assembly, part of the 30S ribosomal subunit. Contacts proteins S4 and S8.

Functionally, with S4 and S12 plays an important role in translational accuracy. Located at the back of the 30S subunit body where it stabilizes the conformation of the head with respect to the body. This is Small ribosomal subunit protein uS5 from Afipia carboxidovorans (strain ATCC 49405 / DSM 1227 / KCTC 32145 / OM5) (Oligotropha carboxidovorans).